The sequence spans 348 residues: MDDKWRESAPVNDIEASSWIRIFRAFDTDHDGLIQCEEMQKTIRDSTYSFGFDHYELQKMSLYLEMREGKPVDFADFCYLMSKCKGYRLREYLFRAALTVTPKNQRIHVFSELQRYKCVPPPIFLIFLSIVQLAFYLYYVVDSSEGVWLSGPIPTMSPLIVSQYHLPELWRLFTYCLINVGIFHIIFNILIQLAIGVPLELVHRWRIYILYFMGVLFGSILSLALDPTVFLCGGAAGSFSLIASHITTIATNFKEMENATCRLPILIVFAALDYVLAVYQRFFAPRIDKVSMYGHLGGLVAGILFTFILFRGSKPSRFYTVSFWVSLVLSGFFIAICITLIAAPSMLH.

The region spanning 14 to 49 is the EF-hand domain; it reads IEASSWIRIFRAFDTDHDGLIQCEEMQKTIRDSTYS. Residues Asp-27, Asp-29, Asp-31, and Glu-38 each contribute to the Ca(2+) site. 7 helical membrane-spanning segments follow: residues 121–141, 177–197, 207–227, 229–249, 263–283, 290–310, and 323–343; these read PPIF…YYVV, LINV…AIGV, IYIL…ALDP, VFLC…ITTI, LPIL…QRFF, VSMY…FILF, and FWVS…LIAA.

This sequence belongs to the peptidase S54 family.

It is found in the membrane. Functionally, probable inactive serine protease. This is Inactive rhomboid-related protein 2 from Caenorhabditis elegans.